Here is a 418-residue protein sequence, read N- to C-terminus: Serine hydroxymethyltransferase (418 aa).

(6S)-5,6,7,8-tetrahydrofolate-binding positions include leucine 120 and glycine 124–leucine 126. Position 229 is an N6-(pyridoxal phosphate)lysine (lysine 229). Serine 353–phenylalanine 355 contributes to the (6S)-5,6,7,8-tetrahydrofolate binding site.

The protein belongs to the SHMT family. In terms of assembly, homodimer. Pyridoxal 5'-phosphate serves as cofactor.

The protein localises to the cytoplasm. It catalyses the reaction (6R)-5,10-methylene-5,6,7,8-tetrahydrofolate + glycine + H2O = (6S)-5,6,7,8-tetrahydrofolate + L-serine. The protein operates within one-carbon metabolism; tetrahydrofolate interconversion. Its pathway is amino-acid biosynthesis; glycine biosynthesis; glycine from L-serine: step 1/1. In terms of biological role, catalyzes the reversible interconversion of serine and glycine with tetrahydrofolate (THF) serving as the one-carbon carrier. This reaction serves as the major source of one-carbon groups required for the biosynthesis of purines, thymidylate, methionine, and other important biomolecules. Also exhibits THF-independent aldolase activity toward beta-hydroxyamino acids, producing glycine and aldehydes, via a retro-aldol mechanism. The chain is Serine hydroxymethyltransferase from Psychrobacter arcticus (strain DSM 17307 / VKM B-2377 / 273-4).